The sequence spans 102 residues: Large ribosomal subunit protein uL24 (102 aa).

The protein belongs to the universal ribosomal protein uL24 family. Part of the 50S ribosomal subunit.

Its function is as follows. One of two assembly initiator proteins, it binds directly to the 5'-end of the 23S rRNA, where it nucleates assembly of the 50S subunit. Functionally, one of the proteins that surrounds the polypeptide exit tunnel on the outside of the subunit. The polypeptide is Large ribosomal subunit protein uL24 (Allorhizobium ampelinum (strain ATCC BAA-846 / DSM 112012 / S4) (Agrobacterium vitis (strain S4))).